The sequence spans 276 residues: UPF0276 protein Caul_0757 (276 aa).

Belongs to the UPF0276 family.

This Caulobacter sp. (strain K31) protein is UPF0276 protein Caul_0757.